The chain runs to 382 residues: D-galactonate dehydratase (382 aa).

Aspartate 183 provides a ligand contact to Mg(2+). Histidine 185 serves as the catalytic Proton donor. 2 residues coordinate Mg(2+): glutamate 209 and glutamate 235. The active-site Proton acceptor is the histidine 285.

Belongs to the mandelate racemase/muconate lactonizing enzyme family. GalD subfamily. It depends on Mg(2+) as a cofactor.

The enzyme catalyses D-galactonate = 2-dehydro-3-deoxy-D-galactonate + H2O. It functions in the pathway carbohydrate acid metabolism; D-galactonate degradation; D-glyceraldehyde 3-phosphate and pyruvate from D-galactonate: step 1/3. Its function is as follows. Catalyzes the dehydration of D-galactonate to 2-keto-3-deoxy-D-galactonate. The chain is D-galactonate dehydratase from Escherichia coli O45:K1 (strain S88 / ExPEC).